We begin with the raw amino-acid sequence, 619 residues long: Histone H3.v1 (619 aa).

The span at 1 to 15 shows a compositional bias: basic and acidic residues; the sequence is MANKPKPSEHLRDLI. Disordered stretches follow at residues 1-99 and 190-526; these read MANK…GSSR and ILPS…RKKR. Low complexity-rich tracts occupy residues 28–50 and 66–99; these read QLKQQQQPRQTQPSRPSSSLTQS and STSESSGSSRSPASSGSSRSSGSSGSSRLSGSSR. The span at 230-287 shows a compositional bias: acidic residues; that stretch reads DQEEEEEEEEEEEEEEEEEEEEEEEEEEEEEEEEEEEEEEEEEEEEEEEEEEEEEEEV. 2 stretches are compositionally biased toward low complexity: residues 296–306 and 314–325; these read GKPLPSPSLSS and SSSVASSESSKQ. Basic residues predominate over residues 326 to 344; the sequence is SRVKVSKKPSPLIKKKPAP. 3 stretches are compositionally biased toward low complexity: residues 345-360, 385-408, and 415-521; these read IKKVTTPTRSKQQQQS, KNVLSSSSSSPSSSSSSSSSLTPT, and IVTT…TPTT.

It belongs to the histone H3 family.

This is Histone H3.v1 (H3v1) from Dictyostelium discoideum (Social amoeba).